The sequence spans 881 residues: Disks large homolog 2 (881 aa).

2 disordered regions span residues 16–41 (HRQQ…MNPA) and 63–88 (LSTT…SFPR). 3 PDZ domains span residues 155-242 (EITL…RRRR), 250-337 (EIKL…GKPT), and 424-505 (KIVL…QYRP). One can recognise an SH3 domain in the interval 539-609 (KRSLYVRALF…PSKRRVERKE (71 aa)). One can recognise a Guanylate kinase-like domain in the interval 683-866 (ARPVIILGPM…IYNQCKMVIE (184 aa)). A disordered region spans residues 709 to 729 (GSCVPPANSSDQEDTTRPKRD).

The protein belongs to the MAGUK family.

It localises to the cell membrane. The protein localises to the postsynaptic density. It is found in the synapse. Its subcellular location is the membrane. The protein resides in the cell projection. It localises to the axon. The protein localises to the perikaryon. In terms of biological role, may play a role in synapse assembly and function. This is Disks large homolog 2 (dlg2) from Danio rerio (Zebrafish).